Consider the following 479-residue polypeptide: Aspartyl/glutamyl-tRNA(Asn/Gln) amidotransferase subunit B (479 aa).

Belongs to the GatB/GatE family. GatB subfamily. Heterotrimer of A, B and C subunits.

The enzyme catalyses L-glutamyl-tRNA(Gln) + L-glutamine + ATP + H2O = L-glutaminyl-tRNA(Gln) + L-glutamate + ADP + phosphate + H(+). It carries out the reaction L-aspartyl-tRNA(Asn) + L-glutamine + ATP + H2O = L-asparaginyl-tRNA(Asn) + L-glutamate + ADP + phosphate + 2 H(+). Allows the formation of correctly charged Asn-tRNA(Asn) or Gln-tRNA(Gln) through the transamidation of misacylated Asp-tRNA(Asn) or Glu-tRNA(Gln) in organisms which lack either or both of asparaginyl-tRNA or glutaminyl-tRNA synthetases. The reaction takes place in the presence of glutamine and ATP through an activated phospho-Asp-tRNA(Asn) or phospho-Glu-tRNA(Gln). The sequence is that of Aspartyl/glutamyl-tRNA(Asn/Gln) amidotransferase subunit B from Geobacter sp. (strain M21).